Reading from the N-terminus, the 199-residue chain is dTTP/UTP pyrophosphatase (199 aa).

The active-site Proton acceptor is the Asp79.

Belongs to the Maf family. YhdE subfamily. The cofactor is a divalent metal cation.

It is found in the cytoplasm. It catalyses the reaction dTTP + H2O = dTMP + diphosphate + H(+). The enzyme catalyses UTP + H2O = UMP + diphosphate + H(+). Functionally, nucleoside triphosphate pyrophosphatase that hydrolyzes dTTP and UTP. May have a dual role in cell division arrest and in preventing the incorporation of modified nucleotides into cellular nucleic acids. The polypeptide is dTTP/UTP pyrophosphatase (Porphyromonas gingivalis (strain ATCC 33277 / DSM 20709 / CIP 103683 / JCM 12257 / NCTC 11834 / 2561)).